Consider the following 489-residue polypeptide: MQAKQQLLIDGAWVDGDAARFAKTDPVSGETLWTATAASATQVEHAVAAARQAFPDWARRSFAERQAVVERFRECLETHREHLATAIAQETGKPLWEARTEVGAMIGKVAISITAYHERTGERARDIGDARAVLRHRPHGVLAVYGPYNFPGHLPNGHIVPALLAGNAVVFKPSEQTPMTADLTLQCWLEAGLPAGVINLVQGAAEVGQALAGSADIDGLLFTGSAKVGGLLHRQFGGQVDKILALELGGNNPLVVKDVPDREAAVLSILQSAFASGGQRCTCARRLIVPHGAVGDDLIDALTSAIAELRVAAPFSEPAPFYAGLTSVEAADGLLAAQDDLVARGGRPLSRMRRLQAGTSLLSPGLIDVTGCDVPDEEHFGPLLKVHRYRDWDEAIALANDTRYGLSAGLIGGERADWDDFLLRIRAGIVNWNRQTTGASSDAPFGGIGDSGNHRPSAYYAADYCAYPVASMEAETLVLPETLPPGVVL.

NAD(+) is bound at residue 224-229 (GSAKVG). Residues Glu-247 and Cys-281 contribute to the active site.

This sequence belongs to the aldehyde dehydrogenase family. AstD subfamily.

It carries out the reaction N-succinyl-L-glutamate 5-semialdehyde + NAD(+) + H2O = N-succinyl-L-glutamate + NADH + 2 H(+). It participates in amino-acid degradation; L-arginine degradation via AST pathway; L-glutamate and succinate from L-arginine: step 4/5. Catalyzes the NAD-dependent reduction of succinylglutamate semialdehyde into succinylglutamate. This Chromohalobacter salexigens (strain ATCC BAA-138 / DSM 3043 / CIP 106854 / NCIMB 13768 / 1H11) protein is N-succinylglutamate 5-semialdehyde dehydrogenase.